The chain runs to 599 residues: Elongation factor 4 (599 aa).

Positions 4–186 (KFIRNFSIIA…AIIKHVPPPL (183 aa)) constitute a tr-type G domain. GTP contacts are provided by residues 16-21 (DHGKST) and 133-136 (NKID).

This sequence belongs to the TRAFAC class translation factor GTPase superfamily. Classic translation factor GTPase family. LepA subfamily.

The protein localises to the cell membrane. The enzyme catalyses GTP + H2O = GDP + phosphate + H(+). Functionally, required for accurate and efficient protein synthesis under certain stress conditions. May act as a fidelity factor of the translation reaction, by catalyzing a one-codon backward translocation of tRNAs on improperly translocated ribosomes. Back-translocation proceeds from a post-translocation (POST) complex to a pre-translocation (PRE) complex, thus giving elongation factor G a second chance to translocate the tRNAs correctly. Binds to ribosomes in a GTP-dependent manner. This is Elongation factor 4 from Ureaplasma parvum serovar 3 (strain ATCC 27815 / 27 / NCTC 11736).